We begin with the raw amino-acid sequence, 393 residues long: Formate-dependent phosphoribosylglycinamide formyltransferase (393 aa).

N(1)-(5-phospho-beta-D-ribosyl)glycinamide contacts are provided by residues 15-16 and Glu-75; that span reads EL. Residues Arg-107, Lys-148, 153–158, 188–191, and Glu-196 contribute to the ATP site; these read SSGKGQ and EEYI. Residues 112–302 enclose the ATP-grasp domain; the sequence is NLAAEKLAIK…EFELHLRAIL (191 aa). Glu-261 and Glu-273 together coordinate Mg(2+). N(1)-(5-phospho-beta-D-ribosyl)glycinamide-binding positions include Asp-280, Lys-350, and 357–358; that span reads RR.

It belongs to the PurK/PurT family. As to quaternary structure, homodimer.

It catalyses the reaction N(1)-(5-phospho-beta-D-ribosyl)glycinamide + formate + ATP = N(2)-formyl-N(1)-(5-phospho-beta-D-ribosyl)glycinamide + ADP + phosphate + H(+). It participates in purine metabolism; IMP biosynthesis via de novo pathway; N(2)-formyl-N(1)-(5-phospho-D-ribosyl)glycinamide from N(1)-(5-phospho-D-ribosyl)glycinamide (formate route): step 1/1. Involved in the de novo purine biosynthesis. Catalyzes the transfer of formate to 5-phospho-ribosyl-glycinamide (GAR), producing 5-phospho-ribosyl-N-formylglycinamide (FGAR). Formate is provided by PurU via hydrolysis of 10-formyl-tetrahydrofolate. In Prochlorococcus marinus (strain SARG / CCMP1375 / SS120), this protein is Formate-dependent phosphoribosylglycinamide formyltransferase.